The following is an 874-amino-acid chain: Protein translocase subunit SecA (874 aa).

ATP-binding positions include glutamine 87, 105-109 (GEGKT), and aspartate 512. Zn(2+) is bound by residues cysteine 859, cysteine 861, cysteine 870, and histidine 871.

It belongs to the SecA family. Monomer and homodimer. Part of the essential Sec protein translocation apparatus which comprises SecA, SecYEG and auxiliary proteins SecDF-YajC and YidC. It depends on Zn(2+) as a cofactor.

Its subcellular location is the cell inner membrane. The protein localises to the cytoplasm. The catalysed reaction is ATP + H2O + cellular proteinSide 1 = ADP + phosphate + cellular proteinSide 2.. Part of the Sec protein translocase complex. Interacts with the SecYEG preprotein conducting channel. Has a central role in coupling the hydrolysis of ATP to the transfer of proteins into and across the cell membrane, serving both as a receptor for the preprotein-SecB complex and as an ATP-driven molecular motor driving the stepwise translocation of polypeptide chains across the membrane. The chain is Protein translocase subunit SecA from Buchnera aphidicola subsp. Schizaphis graminum (strain Sg).